The following is a 701-amino-acid chain: Polyribonucleotide nucleotidyltransferase (701 aa).

The Mg(2+) site is built by aspartate 487 and aspartate 493. The KH domain occupies 554-613; it reads PTMLQMKIDSDKIRDVIGKGGATIRGICEETKASIDIEDDGSVKIYGETKEAAEAAKLRV. The 69-residue stretch at 623-691 folds into the S1 motif domain; the sequence is GKIYVGKVER…NRGRIKLSIK (69 aa).

The protein belongs to the polyribonucleotide nucleotidyltransferase family. As to quaternary structure, component of the RNA degradosome, which is a multiprotein complex involved in RNA processing and mRNA degradation. Requires Mg(2+) as cofactor.

Its subcellular location is the cytoplasm. It catalyses the reaction RNA(n+1) + phosphate = RNA(n) + a ribonucleoside 5'-diphosphate. Involved in mRNA degradation. Catalyzes the phosphorolysis of single-stranded polyribonucleotides processively in the 3'- to 5'-direction. This Pseudomonas aeruginosa (strain LESB58) protein is Polyribonucleotide nucleotidyltransferase.